Here is a 184-residue protein sequence, read N- to C-terminus: Photosystem I assembly protein Ycf4 (184 aa).

2 helical membrane passes run 22-42 (FCWA…GTSS) and 57-77 (IVFF…LFIS).

This sequence belongs to the Ycf4 family.

It is found in the plastid. Its subcellular location is the chloroplast thylakoid membrane. Seems to be required for the assembly of the photosystem I complex. This is Photosystem I assembly protein Ycf4 from Gossypium barbadense (Sea Island cotton).